The chain runs to 326 residues: Phospho-N-acetylmuramoyl-pentapeptide-transferase (326 aa).

9 helical membrane passes run 3 to 23 (ISIS…PAFI), 51 to 71 (TMGG…FALF), 79 to 99 (VGMI…DDFL), 115 to 135 (LALQ…GGDI), 138 to 158 (VFGY…FWLV), 169 to 189 (GVDG…GVIA), 195 to 215 (MDIL…FIFN), 221 to 243 (VFMG…MALH), and 306 to 326 (FFFW…LYLM).

This sequence belongs to the glycosyltransferase 4 family. MraY subfamily. It depends on Mg(2+) as a cofactor.

It localises to the cell membrane. The enzyme catalyses UDP-N-acetyl-alpha-D-muramoyl-L-alanyl-gamma-D-glutamyl-L-lysyl-D-alanyl-D-alanine + di-trans,octa-cis-undecaprenyl phosphate = Mur2Ac(oyl-L-Ala-gamma-D-Glu-L-Lys-D-Ala-D-Ala)-di-trans,octa-cis-undecaprenyl diphosphate + UMP. It functions in the pathway cell wall biogenesis; peptidoglycan biosynthesis. Its function is as follows. Catalyzes the initial step of the lipid cycle reactions in the biosynthesis of the cell wall peptidoglycan: transfers peptidoglycan precursor phospho-MurNAc-pentapeptide from UDP-MurNAc-pentapeptide onto the lipid carrier undecaprenyl phosphate, yielding undecaprenyl-pyrophosphoryl-MurNAc-pentapeptide, known as lipid I. The protein is Phospho-N-acetylmuramoyl-pentapeptide-transferase of Streptococcus pneumoniae (strain 70585).